The chain runs to 115 residues: V-type proton ATPase subunit G (115 aa).

The protein belongs to the V-ATPase G subunit family. V-ATPase is a heteromultimeric enzyme composed of a peripheral catalytic V1 complex (components A to H) attached to an integral membrane V0 proton pore complex (components: a, c, c', c'', d, e, f and VOA1).

It is found in the vacuole membrane. Its function is as follows. Subunit of the V1 complex of vacuolar(H+)-ATPase (V-ATPase), a multisubunit enzyme composed of a peripheral complex (V1) that hydrolyzes ATP and a membrane integral complex (V0) that translocates protons. V-ATPase is responsible for acidifying and maintaining the pH of intracellular compartments. The chain is V-type proton ATPase subunit G (vma-10) from Neurospora crassa (strain ATCC 24698 / 74-OR23-1A / CBS 708.71 / DSM 1257 / FGSC 987).